The sequence spans 955 residues: 2-oxoglutarate dehydrogenase E1 component (955 aa).

The protein belongs to the alpha-ketoglutarate dehydrogenase family. Homodimer. Part of the 2-oxoglutarate dehydrogenase (OGDH) complex composed of E1 (2-oxoglutarate dehydrogenase), E2 (dihydrolipoamide succinyltransferase) and E3 (dihydrolipoamide dehydrogenase); the complex contains multiple copies of the three enzymatic components (E1, E2 and E3). The cofactor is thiamine diphosphate.

The enzyme catalyses N(6)-[(R)-lipoyl]-L-lysyl-[protein] + 2-oxoglutarate + H(+) = N(6)-[(R)-S(8)-succinyldihydrolipoyl]-L-lysyl-[protein] + CO2. Functionally, E1 component of the 2-oxoglutarate dehydrogenase (OGDH) complex which catalyzes the decarboxylation of 2-oxoglutarate, the first step in the conversion of 2-oxoglutarate to succinyl-CoA and CO(2). In Bacillus mycoides (strain KBAB4) (Bacillus weihenstephanensis), this protein is 2-oxoglutarate dehydrogenase E1 component.